The primary structure comprises 277 residues: Urease accessory protein UreD (277 aa).

This sequence belongs to the UreD family. UreD, UreF and UreG form a complex that acts as a GTP-hydrolysis-dependent molecular chaperone, activating the urease apoprotein by helping to assemble the nickel containing metallocenter of UreC. The UreE protein probably delivers the nickel.

Its subcellular location is the cytoplasm. In terms of biological role, required for maturation of urease via the functional incorporation of the urease nickel metallocenter. This chain is Urease accessory protein UreD, found in Yersinia pestis bv. Antiqua (strain Antiqua).